Reading from the N-terminus, the 535-residue chain is Probable inorganic phosphate transporter 1-7 (535 aa).

At 1-24 (MAGDQLNVLNALDVAKTQWYHFTA) the chain is on the cytoplasmic side. The helical transmembrane segment at 25-45 (IIIAGMGFFTDAYDLFCISLV) threads the bilayer. Residues 46–70 (TKLLGRIYYHVDGSEKPGTLPPNVS) lie on the Extracellular side of the membrane. The chain crosses the membrane as a helical span at residues 71-91 (AAVNGVAFCGTLAGQLFFGWL). At 92 to 99 (GDKLGRKK) the chain is on the cytoplasmic side. A helical transmembrane segment spans residues 100 to 120 (VYGMTLMVMVLCSIASGLSFG). At 121-131 (SNPKTVMTTLC) the chain is on the extracellular side. The chain crosses the membrane as a helical span at residues 132-152 (FFRFWLGFGIGGDYPLSATIM). Residues 153 to 161 (SEYANKKTR) lie on the Cytoplasmic side of the membrane. The helical transmembrane segment at 162–182 (GAFIAAVFAMQGFGILTGGIF) threads the bilayer. Topologically, residues 183 to 211 (AIIVSAAFEAKFPAPTYQIDALASTVPQA) are extracellular. The helical transmembrane segment at 212-232 (DYVWRIILMVGALPAAMTYYS) threads the bilayer. Residues 233-289 (RSKMPETARYTALVAKDAKLAASNMSKVLQVEIEAEQQGTEDKSNSFGLFSKEFMKR) lie on the Cytoplasmic side of the membrane. The chain crosses the membrane as a helical span at residues 290–310 (HGLHLLGTTSTWFLLDIAFYS). Residues 311 to 345 (QNLFQKDIFSAIGWIPPAQTMNAIQEVFKIARAQT) lie on the Extracellular side of the membrane. Residues 346-366 (LIALCSTVPGYWFTVAFIDVI) traverse the membrane as a helical segment. The Cytoplasmic segment spans residues 367-368 (GR). The helical transmembrane segment at 369 to 389 (FAIQMMGFFFMTVFMFALAIP) threads the bilayer. At 390-399 (YDHWTHKENR) the chain is on the extracellular side. A helical membrane pass occupies residues 400–420 (IGFVAMYSLTFFFANFGPNAT). Over 421 to 438 (TFVVPAEIFPARFRSTCH) the chain is Cytoplasmic. Residues 439 to 459 (GISAASGKLGAMVGAFGFLYL) traverse the membrane as a helical segment. Topologically, residues 460–480 (AQSPDKTKTEHGYPPGIGVKN) are extracellular. A helical membrane pass occupies residues 481 to 501 (SLIVLGVVNLLGMVFTLLVPE). The Cytoplasmic segment spans residues 502 to 535 (SKGKSLEEMSGENEQNDESSSSSNNNSNNAVSTA). Residues 506-535 (SLEEMSGENEQNDESSSSSNNNSNNAVSTA) form a disordered region. Low complexity predominate over residues 519–535 (ESSSSSNNNSNNAVSTA). Ser-520 is subject to Phosphoserine.

It belongs to the major facilitator superfamily. Phosphate:H(+) symporter (TC 2.A.1.9) family. In terms of tissue distribution, mature pollen.

It is found in the membrane. High-affinity transporter for external inorganic phosphate. This Arabidopsis thaliana (Mouse-ear cress) protein is Probable inorganic phosphate transporter 1-7 (PHT1-7).